The chain runs to 477 residues: Minor capsid protein (477 aa).

It belongs to the closteroviridae minor capsid protein family.

The protein localises to the virion. Functionally, minor capsid protein that encapsidates the 5'-terminal portion of the viral genome. The sequence is that of Minor capsid protein from Vitis vinifera (Grape).